A 927-amino-acid chain; its full sequence is Tubulin monoglycylase TTLL3 (927 aa).

A compositionally biased stretch (polar residues) spans Arg35 to Ser47. 2 disordered regions span residues Arg35 to Val113 and His194 to Glu227. Residues Asp216–Asn226 show a composition bias toward acidic residues. The TTL domain occupies Val345–Thr702. Residues Lys476, Arg482 to Gly483, Gln514 to Ile517, Lys527 to Asp529, and Cys571 to Asn572 contribute to the ATP site. Arg482 is a binding site for a protein. Residues Asp649, Glu662, and Asn664 each contribute to the Mg(2+) site. Glu662 lines the ATP pocket. 2 disordered regions span residues Val735–Gly799 and Glu897–Thr927. Residues Leu752–Arg769 show a composition bias toward polar residues. The span at Ala776–Glu788 shows a compositional bias: basic and acidic residues. Over residues Leu916–Thr927 the composition is skewed to polar residues.

It depends on Mg(2+) as a cofactor. As to expression, highly expressed in brain and testis. Expressed in heart, kidney, liver, lung, muscle, spleen, trachea and colon. Expressed in sperm flagellum. In the brain, specifically expressed in ependymal cilia.

It localises to the cytoplasm. The protein localises to the cytoskeleton. The protein resides in the cell projection. It is found in the cilium. Its subcellular location is the cilium axoneme. It localises to the flagellum axoneme. It carries out the reaction L-glutamyl-[protein] + glycine + ATP = glycyl-L-glutamyl-[protein] + ADP + phosphate + H(+). Its function is as follows. Monoglycylase which modifies alpha- and beta-tubulin, adding a single glycine on the gamma-carboxyl groups of specific glutamate residues to generate monoglycine side chains within the C-terminal tail of tubulin. Not involved in elongation step of the polyglycylation reaction. Preferentially glycylates a beta-tail peptide over the alpha-tail, although shifts its preference toward alpha-tail as beta-tail glutamylation increases. Competes with polyglutamylases for modification site on beta-tubulin substrate, thereby creating an anticorrelation between glycylation and glutamylation reactions. Together with TTLL8, mediates microtubule glycylation of primary and motile cilia, which is essential for their stability and maintenance. Involved in microtubule glycylation of primary cilia in colon which controls cell proliferation of epithelial cells and plays an essential role in colon cancer development. Together with TTLL8, glycylates sperm flagella which regulates axonemal dynein motor activity, thereby controlling flagellar beat, directional sperm swimming and male fertility. The sequence is that of Tubulin monoglycylase TTLL3 from Mus musculus (Mouse).